The primary structure comprises 361 residues: Aromatic amino acid aminotransferase (361 aa).

An N6-(pyridoxal phosphate)lysine modification is found at K221.

It belongs to the class-II pyridoxal-phosphate-dependent aminotransferase family. Homodimer. Requires pyridoxal 5'-phosphate as cofactor.

The catalysed reaction is an aromatic L-alpha-amino acid + 2-oxoglutarate = an aromatic oxo-acid + L-glutamate. Its function is as follows. Aminotransferase that catalyzes the conversion of aromatic amino acids and 2-oxoglutarate into corresponding aromatic oxo acids and L-glutamate. In Mycobacterium marinum (strain ATCC BAA-535 / M), this protein is Aromatic amino acid aminotransferase.